A 251-amino-acid polypeptide reads, in one-letter code: Flap endonuclease Xni (251 aa).

Position 104 (Asp-104) interacts with Mg(2+). Positions 160 to 249 (VLPRQLPDYW…IDGNLQQLRL (90 aa)) constitute a 5'-3' exonuclease domain. Leu-171, Ala-172, Pro-180, Val-182, and Ile-185 together coordinate K(+). The interval 184-189 (GIGPKS) is interaction with DNA.

The protein belongs to the Xni family. Requires Mg(2+) as cofactor. It depends on K(+) as a cofactor.

Functionally, has flap endonuclease activity. During DNA replication, flap endonucleases cleave the 5'-overhanging flap structure that is generated by displacement synthesis when DNA polymerase encounters the 5'-end of a downstream Okazaki fragment. In Salmonella choleraesuis (strain SC-B67), this protein is Flap endonuclease Xni.